The following is a 335-amino-acid chain: Trans-1,2-dihydrobenzene-1,2-diol dehydrogenase (335 aa).

This sequence belongs to the Gfo/Idh/MocA family. In terms of assembly, homodimer. In terms of tissue distribution, liver, lens, spleen, kidney and small intestine.

The enzyme catalyses (1R,2R)-1,2-dihydrobenzene-1,2-diol + NADP(+) = catechol + NADPH + H(+). The catalysed reaction is D-xylose + NADP(+) = D-xylono-1,5-lactone + NADPH + H(+). With respect to regulation, strongly inhibited by isoascorbic acid, 4-hydroxyacetophenone and chloromercuriphenylsulphonate. Stimulated by various salts. This Sus scrofa (Pig) protein is Trans-1,2-dihydrobenzene-1,2-diol dehydrogenase (DHDH).